Reading from the N-terminus, the 1098-residue chain is Trehalose synthase complex regulatory subunit TSL1 (1098 aa).

Phosphoserine occurs at positions 49, 53, 56, 71, 77, 135, 147, and 161. Disordered regions lie at residues 59 to 86, 129 to 168, and 192 to 244; these read APAP…RASS, SVER…QQQQ, and SQTS…PSIK. Polar residues predominate over residues 72-86; the sequence is RSATRSPSAFNRASS. Tandem repeats lie at residues 144–150 and 158–164. The 2 X 7 AA repeats of R-I-A-S-P-I-Q stretch occupies residues 144–164; it reads RIASPIQHEHDSGSRIASPIQ. The segment covering 213–227 has biased composition (polar residues); that stretch reads RPTSAATSLVNRTKQ. Positions 228–242 are enriched in low complexity; sequence GSASSGSSGSSAPPS. Serine 229 carries the phosphoserine modification. Threonine 251 is subject to Phosphothreonine. The disordered stretch occupies residues 274–297; it reads ADISSSETSSQHNESDPDDLTTAP. Phosphoserine is present on serine 303. The tract at residues 320 to 812 is TPS complex domain; sequence GGYSNKSKLK…FNQEGSKIFK (493 aa). The residue at position 815 (threonine 815) is a Phosphothreonine. The disordered stretch occupies residues 1000-1027; the sequence is SSGQITNIQTPSQQNPSDQEQQPPASPT.

The protein in the C-terminal section; belongs to the glycosyltransferase 20 family. The trehalose synthase complex is composed of the two catalytic subunits TPS1 and TPS2, and at least one of the two regulatory subunits TPS3 or TSL1.

Its subcellular location is the cytoplasm. In terms of biological role, regulatory subunit of the trehalose synthase complex that catalyzes the production of trehalose from glucose-6-phosphate and UDP-glucose in a two step process. May stabilize the trehalose synthase complex, and confer sensitivity to physiological concentrations of phosphate and to fructose 6-phosphate. This is Trehalose synthase complex regulatory subunit TSL1 (TSL1) from Saccharomyces cerevisiae (strain ATCC 204508 / S288c) (Baker's yeast).